We begin with the raw amino-acid sequence, 954 residues long: Leucine--tRNA ligase (954 aa).

The short motif at 67 to 78 (PYPSGAGLHVGH) is the 'HIGH' region element. The 'KMSKS' region signature appears at 729–733 (KMGKS). Position 732 (Lys732) interacts with ATP.

It belongs to the class-I aminoacyl-tRNA synthetase family.

It localises to the cytoplasm. The enzyme catalyses tRNA(Leu) + L-leucine + ATP = L-leucyl-tRNA(Leu) + AMP + diphosphate. The protein is Leucine--tRNA ligase of Salinispora tropica (strain ATCC BAA-916 / DSM 44818 / JCM 13857 / NBRC 105044 / CNB-440).